A 418-amino-acid chain; its full sequence is Voltage-gated ClC-type chloride channel ClcB (418 aa).

10 consecutive transmembrane segments (helical) span residues 5–25, 54–74, 146–166, 168–188, 222–242, 260–280, 291–311, 316–336, 352–372, and 380–400; these read LLIA…FRHA, LLTP…WQKF, LWIA…PLAG, LFIA…PVII, ALII…LTLM, LALG…VWGN, APPL…AVLA, GAPG…GMLY, LLLG…APIM, and MTGE…ASVI.

The protein belongs to the chloride channel (TC 2.A.49) family. ClcB subfamily.

Its subcellular location is the cell inner membrane. Probably acts as an electrical shunt for an outwardly-directed proton pump that is linked to amino acid decarboxylation, as part of the extreme acid resistance (XAR) response. The protein is Voltage-gated ClC-type chloride channel ClcB of Escherichia coli O9:H4 (strain HS).